Reading from the N-terminus, the 245-residue chain is Ribonuclease PH (245 aa).

Phosphate contacts are provided by residues Arg86 and 124–126 (GTR).

It belongs to the RNase PH family. Homohexameric ring arranged as a trimer of dimers.

The catalysed reaction is tRNA(n+1) + phosphate = tRNA(n) + a ribonucleoside 5'-diphosphate. Phosphorolytic 3'-5' exoribonuclease that plays an important role in tRNA 3'-end maturation. Removes nucleotide residues following the 3'-CCA terminus of tRNAs; can also add nucleotides to the ends of RNA molecules by using nucleoside diphosphates as substrates, but this may not be physiologically important. Probably plays a role in initiation of 16S rRNA degradation (leading to ribosome degradation) during starvation. The sequence is that of Ribonuclease PH from Bacillus velezensis (strain DSM 23117 / BGSC 10A6 / LMG 26770 / FZB42) (Bacillus amyloliquefaciens subsp. plantarum).